We begin with the raw amino-acid sequence, 184 residues long: Inner membrane-spanning protein YciB (184 aa).

The next 5 helical transmembrane spans lie at 19–39 (LVGIREAAITLIIATLIQLLI), 52–72 (LFMGIAVVFFGTLTAYFNQLE), 76–96 (WKVTIVYAIFALVLLVSQYGF), 123–143 (LGWALFFLLCMLINLYISQYL), and 151–171 (FKTFGILGMTLIATIITGIYI).

The protein belongs to the YciB family.

It is found in the cell inner membrane. In terms of biological role, plays a role in cell envelope biogenesis, maintenance of cell envelope integrity and membrane homeostasis. In Pasteurella multocida (strain Pm70), this protein is Inner membrane-spanning protein YciB.